Reading from the N-terminus, the 897-residue chain is Interleukin enhancer-binding factor 3-A (897 aa).

In terms of domain architecture, DZF spans 5–379 (RIFLNDDRHV…PLKRPIEEDG (375 aa)). Disordered stretches follow at residues 52-85 (QEKDCSGEQEQPMAEETETTEEGKDSEMKTGENP), 364-403 (TTYAMPPLKRPIEEDGDDKSPSKKKKKIQKKDEKSEPPQV), and 466-502 (MGLPTGMEEKEEGTDESEQKPVVQTPAQPDDSAEVDS). Basic and acidic residues-rich tracts occupy residues 72–81 (EEGKDSEMKT) and 373–384 (RPIEEDGDDKSP). Positions 372–390 (KRPIEEDGDDKSPSKKKKK) match the Bipartite nuclear localization signal motif. DRBM domains lie at 399-468 (EPPQ…DMGL) and 521-587 (HGKN…KLFP). 2 disordered regions span residues 627–650 (PPPQAMRGRGRGGMNRGRGRGRGG) and 708–797 (GDSY…AQGA). Over residues 637-650 (RGGMNRGRGRGRGG) the composition is skewed to gly residues. Over residues 714–747 (PTPPKPFVNKKPPPPQQQQQQQPPPQHASNPPKP) the composition is skewed to pro residues. Positions 749–794 (YNQGYQGHQGGQQQQQQQQQQQTYNQNQYSNYGPPQKQKGGYNQGA) are enriched in low complexity.

As to quaternary structure, a component of a ybx2/frgy2-containing mRNA-ribonucleoprotein (mRNP) complex. Also a component of the CCAAT box transcription factor (CBTF) complex. Phosphorylated. Phosphorylation affects nuclear translocation. Post-translationally, methylated by protein arginine N-methyltransferase 1 (prmt1b) in the RGG-rich domain. Methylation decreases DNA-binding and thereby decreases transcription of the gata2 gene, but does not regulate dsRNA binding or subcellular localization. As to expression, expressed mainly in the ectoderm (at protein level).

It is found in the nucleus. The protein resides in the cytoplasm. In terms of biological role, RNA-binding protein that plays an essential role in the biogenesis of circular RNAs (circRNAs) which are produced by back-splicing circularization of pre-mRNAs. Within the nucleus, promotes circRNAs processing by stabilizing the regulatory elements residing in the flanking introns of the circularized exons. Plays thereby a role in the back-splicing of a subset of circRNAs. As a consequence, participates in a wide range of transcriptional and post-transcriptional processes. Binds to poly-U elements and AU-rich elements (AREs) in the 3'-UTR of target mRNAs. Upon viral infection, ILF3 accumulates in the cytoplasm and participates in the innate antiviral response. Mechanistically, ILF3 becomes phosphorylated and activated by the double-stranded RNA-activated protein kinase/PKR which releases ILF3 from cellular mature circRNAs. In turn, unbound ILF3 molecules are able to interact with and thus inhibit viral mRNAs. Has a cytoplasmic role early in development as part of a ribonucleoprotein (mRNP) complex which may regulate mRNA transport and/or translation. Following nuclear localization at the mid-blastula transition, acts as a transcription factor and binds the 5'-CCAAT-3' promoter sequence to regulate transcription of the gata2 gene as a subunit of the CCAAT box transcription factor (CBTF). Its role as an mRNP component negatively regulates its activity as a transcription factor by precluding its nuclear localization. This is Interleukin enhancer-binding factor 3-A (ilf3-a) from Xenopus laevis (African clawed frog).